The primary structure comprises 931 residues: Protocadherin gamma-A5 (931 aa).

The signal sequence occupies residues 1-29 (MASPPRGWGCGELLLPFMLLGTLCEPGSG). Cadherin domains follow at residues 30–133 (QIRY…FPRF), 134–242 (RDEE…APLF), 243–347 (TPSE…APEV), 348–452 (ILTS…PPNF), 453–562 (PQAS…TPEI), and 570–683 (DGST…TPID). The Extracellular segment spans residues 30 to 692 (QIRYSMPEEL…DPEDLDLTLY (663 aa)). Residues asparagine 419 and asparagine 545 are each glycosylated (N-linked (GlcNAc...) asparagine). Residues 693 to 713 (LVVAVAAVSCVFLAFVIVLLV) form a helical membrane-spanning segment. The Cytoplasmic portion of the chain corresponds to 714 to 931 (LRLRRWHKSR…KKKSGKKEKK (218 aa)). Disordered regions lie at residues 800–840 (NKEE…WPNN) and 901–931 (ATLT…KEKK). The segment covering 809–840 (APPNTDWRFSQAQRPGTSGSQNGDDTGTWPNN) has biased composition (polar residues). Residues 921-931 (NKKKSGKKEKK) are compositionally biased toward basic residues.

Its subcellular location is the cell membrane. Functionally, potential calcium-dependent cell-adhesion protein. May be involved in the establishment and maintenance of specific neuronal connections in the brain. This chain is Protocadherin gamma-A5 (PCDHGA5), found in Homo sapiens (Human).